Consider the following 175-residue polypeptide: Thioredoxin M3, chloroplastic (175 aa).

Residues 1-59 constitute a chloroplast transit peptide; the sequence is MAATATACPAPPPPRSLYRGVALAAPGRRRAGYGASSSAARRWPGCRRRWAAHRIRTVS. The Thioredoxin domain maps to 61–171; sequence AYSPRGAKTI…YVRAIEKSIS (111 aa). Catalysis depends on nucleophile residues C95 and C98. A disulfide bond links C95 and C98.

Belongs to the thioredoxin family. Plant M-type subfamily.

Its subcellular location is the plastid. It is found in the chloroplast. Functionally, probable thiol-disulfide oxidoreductase that may be involved in the redox regulation of chloroplastic enzymes. The chain is Thioredoxin M3, chloroplastic from Oryza sativa subsp. japonica (Rice).